The following is a 361-amino-acid chain: Inactive 2'-5'-oligoadenylate synthase 1D (361 aa).

Belongs to the 2-5A synthase family. As to quaternary structure, interacts with OAS1A, the interaction inhibits OAS1A catalytic activity. In terms of tissue distribution, expressed specifically in oocytes (at protein level). Expressed at highest level in ovary with lesser amounts in intestine, brain, thymus lung, kidney, liver and uterus.

Its subcellular location is the cytoplasm. Its function is as follows. Does not have 2'-5'-oligoadenylate synthetase activity, but can bind double-stranded RNA. May play a role in the control of female fertility, possibly by binding to and inhibiting OAS1A. The polypeptide is Inactive 2'-5'-oligoadenylate synthase 1D (Mus musculus (Mouse)).